An 87-amino-acid chain; its full sequence is UPF0250 protein NT01EI_2946 (87 aa).

The protein belongs to the UPF0250 family.

This Edwardsiella ictaluri (strain 93-146) protein is UPF0250 protein NT01EI_2946.